Here is a 225-residue protein sequence, read N- to C-terminus: Ribonuclease 3 (225 aa).

The 123-residue stretch at 5–127 folds into the RNase III domain; sequence IEKLTRQLGY…IIGAVYLDSD (123 aa). Glu-40 is a Mg(2+) binding site. The active site involves Asp-44. Residues Asp-113 and Glu-116 each contribute to the Mg(2+) site. The active site involves Glu-116. Positions 154-224 constitute a DRBM domain; it reads DPKTRLQEFL…AELALEQLTN (71 aa).

Belongs to the ribonuclease III family. As to quaternary structure, homodimer. Mg(2+) is required as a cofactor.

It is found in the cytoplasm. It catalyses the reaction Endonucleolytic cleavage to 5'-phosphomonoester.. Digests double-stranded RNA. Involved in the processing of primary rRNA transcript to yield the immediate precursors to the large and small rRNAs (23S and 16S). Processes some mRNAs, and tRNAs when they are encoded in the rRNA operon. Processes pre-crRNA and tracrRNA of type II CRISPR loci if present in the organism. The polypeptide is Ribonuclease 3 (Vibrio vulnificus (strain YJ016)).